Reading from the N-terminus, the 246-residue chain is tRNA (guanine-N(7)-)-methyltransferase (246 aa).

Residues 1-23 are disordered; it reads MIESSSPTPPALHEGAPADVSHP. S-adenosyl-L-methionine-binding residues include Glu-75, Glu-100, Asp-127, and Asp-150. Asp-150 is an active-site residue. A substrate-binding site is contributed by Lys-154. The tract at residues 156–161 is interaction with RNA; that stretch reads KHNKRR. Substrate contacts are provided by residues Asp-186 and 225 to 228; that span reads TKFE.

The protein belongs to the class I-like SAM-binding methyltransferase superfamily. TrmB family.

It catalyses the reaction guanosine(46) in tRNA + S-adenosyl-L-methionine = N(7)-methylguanosine(46) in tRNA + S-adenosyl-L-homocysteine. The protein operates within tRNA modification; N(7)-methylguanine-tRNA biosynthesis. Functionally, catalyzes the formation of N(7)-methylguanine at position 46 (m7G46) in tRNA. In Polaromonas naphthalenivorans (strain CJ2), this protein is tRNA (guanine-N(7)-)-methyltransferase.